A 710-amino-acid polypeptide reads, in one-letter code: Bifunctional sesterterpene synthase (710 aa).

Residues Met-1–Glu-327 form a stellata-2,6,19-trien synthase region. 2 residues coordinate Mg(2+): Asp-92 and Asp-96. Residues Asp-92, Asp-96, Arg-181–Asp-184, and Ser-229–Glu-233 contribute to the substrate site. The short motif at Asp-92 to Asp-96 is the DDXXD motif 1 element. The NSE motif signature appears at Tyr-278–Lys-286. Arg-318 to Tyr-319 serves as a coordination point for substrate. A geranylgeranyl diphosphate synthase region spans residues Arg-328–Asn-709. A disordered region spans residues His-365–Gly-404. The segment covering Val-368–Thr-380 has biased composition (polar residues). Positions 430, 433, and 462 each coordinate isopentenyl diphosphate. Mg(2+) is bound by residues Asp-469 and Asp-473. The DDXXD motif 2 signature appears at Asp-469–Asp-473. Arg-478 lines the dimethylallyl diphosphate pocket. Arg-479 contributes to the isopentenyl diphosphate binding site. Lys-556, Thr-557, Gln-592, Asn-599, Lys-609, and Lys-619 together coordinate dimethylallyl diphosphate.

The protein in the C-terminal section; belongs to the FPP/GGPP synthase family. In the N-terminal section; belongs to the terpene synthase family. As to quaternary structure, hexamer.

The enzyme catalyses 4 isopentenyl diphosphate + dimethylallyl diphosphate = (2E,6E,10E,14E)-geranylfarnesyl diphosphate + 4 diphosphate. It catalyses the reaction (2E,6E,10E,14E)-geranylfarnesyl diphosphate = variecoladiene + diphosphate. It participates in secondary metabolite biosynthesis; terpenoid biosynthesis. In terms of biological role, multifunctional sesterterpene synthase; part of the gene cluster that mediates the biosynthesis of the sesterterpene variecolin. The first step in the pathway is performed by the variecoladiene synthase vrcA that possesses both prenyl transferase and terpene cyclase activity, converting isopentenyl diphosphate and dimethylallyl diphosphate into geranylfarnesyl pyrophosphate (GFPP) and then converting GFPP into the tetracyclic variecoladiene. The cytochrome P450 monooxygenase vrcB then catalyzes multiple oxidations at C-5 and C-20 positions to yield variecolin. The protein is Bifunctional sesterterpene synthase of Aspergillus aculeatus (strain ATCC 16872 / CBS 172.66 / WB 5094).